We begin with the raw amino-acid sequence, 730 residues long: Translation initiation factor IF-2 (730 aa).

Residues 48–151 are disordered; sequence GNGNQKQGGS…NKAKPLPEKV (104 aa). Basic and acidic residues-rich tracts occupy residues 61–77 and 89–104; these read EQQK…DHGQ and NQHD…KGKA. A compositionally biased stretch (basic residues) spans 110–123; it reads KPKHKGNKNKKQHQ. Residues 137 to 148 show a composition bias toward basic and acidic residues; sequence RQPEMNKAKPLP. The tr-type G domain occupies 231–400; it reads ERPPVVTIMG…LLVAEVEELK (170 aa). A G1 region spans residues 240–247; that stretch reads GHVDHGKT. 240 to 247 lines the GTP pocket; the sequence is GHVDHGKT. Residues 265-269 are G2; that stretch reads GITQH. Residues 286-289 are G3; it reads DTPG. Residues 286–290 and 340–343 each bind GTP; these read DTPGH and NKMD. The segment at 340 to 343 is G4; that stretch reads NKMD. Positions 376 to 378 are G5; the sequence is SAL.

This sequence belongs to the TRAFAC class translation factor GTPase superfamily. Classic translation factor GTPase family. IF-2 subfamily.

It is found in the cytoplasm. Functionally, one of the essential components for the initiation of protein synthesis. Protects formylmethionyl-tRNA from spontaneous hydrolysis and promotes its binding to the 30S ribosomal subunits. Also involved in the hydrolysis of GTP during the formation of the 70S ribosomal complex. The protein is Translation initiation factor IF-2 of Halalkalibacterium halodurans (strain ATCC BAA-125 / DSM 18197 / FERM 7344 / JCM 9153 / C-125) (Bacillus halodurans).